Reading from the N-terminus, the 397-residue chain is Acylalkylpyrone synthase csyB (397 aa).

CoA is bound by residues Lys50 and 50–57 (KMLEINRK). The active-site Nucleophile is the Cys155. A substrate-binding site is contributed by 214 to 215 (GD). CoA is bound by residues Ile267, Gly312, 312 to 315 (GGYA), Tyr314, and Ala315. His377 is an active-site residue.

It belongs to the thiolase-like superfamily. Chalcone/stilbene synthases family. Homodimer.

In terms of biological role, acylalkylpyrone synthase that catalyzes not only the polyketide chain elongation but also the one-pot condensation of two beta-ketoacyl units to produce the 3-acyl-4-hydroxy-6-alkyl-alpha-pyrone (AcAP) scaffold, a precursor of csypyrone B. The enzyme reaction is initiated by the loading of acetoacetyl-CoA onto Cys-155, and subsequent thioester bond cleavage by the nucleophilic water generates the beta-keto acid intermediate, which is placed within a pocket. The second beta-ketoacyl unit is then produced by polyketide chain elongation of fatty acyl-CoA with one molecule of malonyl-CoA, and the condensation with the beta-ketoacid generates the final products. Csypyrone B1 is the major product and contains a propanoic acid side-chain, whereas csypyrones B2 and B3 are minor compounds that contain butyric or pentanoic acid side-chains, respectively. This Aspergillus oryzae (strain ATCC 42149 / RIB 40) (Yellow koji mold) protein is Acylalkylpyrone synthase csyB.